The primary structure comprises 804 residues: Probable copper-exporting P-type ATPase (804 aa).

Residues 1–101 (MVKDTYISSA…VEHLSRMKRK (101 aa)) lie on the Cytoplasmic side of the membrane. One can recognise an HMA 1 domain in the interval 16-82 (MERTVRVTGM…VIEDLGYGVV (67 aa)). Cu(+)-binding residues include Cys27 and Cys30. Residues 102–122 (LYVAAFAGVLLLFLAHFISLP) traverse the membrane as a helical segment. At 123-128 (YEDFVQ) the chain is on the extracellular side. A helical membrane pass occupies residues 129 to 149 (LLIALPAIFYSGSSIFKAAFS). At 150–159 (ALRRRTLNMD) the chain is on the cytoplasmic side. Residues 160-180 (VMYSMGVGAAFLASVLSTAGV) form a helical membrane-spanning segment. At 181–186 (LPREYS) the chain is on the extracellular side. A helical transmembrane segment spans residues 187 to 204 (FYETSVLLLAFLLLGRTL). Residues 205–339 (EARAKSRTGE…PIQRLADKVV (135 aa)) are Cytoplasmic-facing. A helical membrane pass occupies residues 340–360 (AYFIPTVLLVAISAFIYWYFI). At 361–364 (AHAP) the chain is on the extracellular side. Residues 365–385 (LLFAFTTLIAVLVVACPCAFG) form a helical membrane-spanning segment. The Cytoplasmic portion of the chain corresponds to 386–680 (LATPTALTVG…KIKQNIFWAL (295 aa)). Asp424 acts as the 4-aspartylphosphate intermediate in catalysis. ATP-binding positions include 457 to 462 (ERRSEH) and 490 to 501 (GEGVVADGILVG). Mg(2+) is bound by residues Asp618 and Asp622. The chain crosses the membrane as a helical span at residues 681 to 701 (IYNVILIPAAAGLLYPIFGVV). Topologically, residues 702–704 (FRP) are extracellular. The chain crosses the membrane as a helical span at residues 705 to 725 (EFAGLAMAMSSVSVVANSLLL). The Cytoplasmic segment spans residues 726–804 (RNYVPPIRRG…AAGYQAKLRS (79 aa)). Residues 740–801 (EKIVLELSGL…AVEAAGYQAK (62 aa)) form the HMA 2 domain. Cys751 and Cys754 together coordinate Cu(+).

It belongs to the cation transport ATPase (P-type) (TC 3.A.3) family. Type IB subfamily. As to quaternary structure, interacts with CopZ probably in the CopZ Cu(+)-bound form.

The protein resides in the cell membrane. It catalyses the reaction Cu(+)(in) + ATP + H2O = Cu(+)(out) + ADP + phosphate + H(+). With respect to regulation, activated by Cu(+) and Ag(+) and inhibited by vanadate. Activated by CopZ in its Cu(+)-bound form. In terms of biological role, probably involved in copper and silver export. In Archaeoglobus fulgidus (strain ATCC 49558 / DSM 4304 / JCM 9628 / NBRC 100126 / VC-16), this protein is Probable copper-exporting P-type ATPase (copA).